Reading from the N-terminus, the 365-residue chain is uncharacterized protein (365 aa).

The next 6 membrane-spanning stretches (helical) occupy residues 3 to 23, 60 to 80, 100 to 120, 141 to 161, 171 to 191, and 280 to 300; these read MDTS…LYSI, IGII…LNII, VFLF…LIAI, SGIL…GDEF, AIAS…IPLL, and TALF…LALF.

This sequence to S.solfataricus C04034.

The protein resides in the cell membrane. This is an uncharacterized protein from Methanocaldococcus jannaschii (strain ATCC 43067 / DSM 2661 / JAL-1 / JCM 10045 / NBRC 100440) (Methanococcus jannaschii).